Consider the following 764-residue polypeptide: FAST kinase domain-containing protein 5, mitochondrial (764 aa).

The transit peptide at 1–27 (MAATLKSLKLLRYQAFCSPSAFGAVRS) directs the protein to the mitochondrion. A disordered region spans residues 68 to 94 (IPTTSSARPGLEFSKTSSSKASTLQLG). Over residues 81 to 93 (SKTSSSKASTLQL) the composition is skewed to polar residues. Ser-95 is modified (phosphoserine). N6-acetyllysine is present on Lys-507. In terms of domain architecture, RAP spans 697–757 (LAIQFTNRNQ…RLEKLAFLHE (61 aa)).

The protein belongs to the FAST kinase family. As to quaternary structure, found in a complex with GRSF1, DDX28, DHX30 and FASTKD2. Associates with the 12S mitochondrial rRNA (12S mt-rRNA).

The protein localises to the mitochondrion matrix. The protein resides in the mitochondrion nucleoid. Functionally, plays an important role in the processing of non-canonical mitochondrial mRNA precursors. In Pongo abelii (Sumatran orangutan), this protein is FAST kinase domain-containing protein 5, mitochondrial (FASTKD5).